We begin with the raw amino-acid sequence, 181 residues long: Adenylate kinase (181 aa).

7-15 (GVAGVGKTT) provides a ligand contact to ATP.

It belongs to the archaeal adenylate kinase family.

Its subcellular location is the cytoplasm. It carries out the reaction AMP + ATP = 2 ADP. The chain is Adenylate kinase (adkA) from Thermoplasma volcanium (strain ATCC 51530 / DSM 4299 / JCM 9571 / NBRC 15438 / GSS1).